A 458-amino-acid polypeptide reads, in one-letter code: LysM domain-containing protein ARB_05157 (458 aa).

An N-terminal signal peptide occupies residues 1–19; sequence MVSLKVCFLLLASSELAFG. Residues 157 to 203 form the LysM 1 domain; it reads AFHLVKQGEDCGTISATYGITSAQFLAWNPSAGKDCTGLWANAYACV. Residues 210–232 form a disordered region; it reads PPKTTSQAPQPTPTKPSNGIETP. Residues 212-229 show a composition bias toward polar residues; sequence KTTSQAPQPTPTKPSNGI. LysM domains follow at residues 245-291, 325-371, and 409-455; these read KFHL…YACV, KFYL…YSCV, and KFHF…YLCV.

Its subcellular location is the secreted. Might have a role in sequestration of chitin oligosaccharides (breakdown products of fungal cell walls that are released during invasion and act as triggers of host immunity) to dampen host defense. This Arthroderma benhamiae (strain ATCC MYA-4681 / CBS 112371) (Trichophyton mentagrophytes) protein is LysM domain-containing protein ARB_05157.